A 1183-amino-acid chain; its full sequence is Atrophin-1 (1183 aa).

3 disordered regions span residues 1–603, 617–760, and 780–855; these read MKTR…ITTS, SPAG…ARFN, and LEGS…HRPP. The Nuclear localization signal motif lies at 16–32; it reads RKKEAPGPREELRSRGR. Residues 17 to 29 are compositionally biased toward basic and acidic residues; the sequence is KKEAPGPREELRS. Serine 34 carries the phosphoserine modification. Residues 45–63 are compositionally biased toward basic and acidic residues; the sequence is GKAEKSRQTAKKARVEETS. 5 positions are modified to phosphoserine: serine 77, serine 79, serine 100, serine 102, and serine 106. The segment covering 107–127 has biased composition (basic and acidic residues); the sequence is LDGRSINDDGSSDPRDIDQDN. Residues 128 to 151 are compositionally biased toward polar residues; it reads RSTSPSIYSPGSVENDSDSSSGLS. Composition is skewed to pro residues over residues 157–173 and 207–218; these read PYHPPPLFPPSPPPPDS and GPPPGAPPPHPQ. The span at 261–272 shows a compositional bias: low complexity; sequence IPISSSGASGAP. Residues 344–373 are compositionally biased toward pro residues; sequence PPGPEKGPTLAPSPHPLPPASSSAPGPPMR. The span at 377 to 400 shows a compositional bias: low complexity; sequence SSCSSSSVAASSSSSAATSQYPAS. The segment covering 415 to 436 has biased composition (polar residues); it reads SMSVSNQPPKYTQPSLPSQAVW. Residues 510-560 are involved in binding BAIAP2; that stretch reads HPLESSNSHHAHPYNMSPSLGSLRPYPPGPAHLPPSHGQVSYSQAGPNGPP. The segment covering 562-584 has biased composition (low complexity); the sequence is SSSSNSSGSSSQAAYSCSHPSSS. Serine 625 bears the Phosphoserine mark. Position 634 is an N6-acetyllysine (lysine 634). Phosphothreonine is present on threonine 646. A Phosphoserine modification is found at serine 654. At threonine 662 the chain carries Phosphothreonine. Composition is skewed to pro residues over residues 701-711 and 732-745; these read LPPPPAAPTTG and SPVPPARSPSPPPK. Serine 732 bears the Phosphoserine; by MAPK8 mark. Residues serine 739 and serine 741 each carry the phosphoserine modification. Over residues 788-832 the composition is skewed to basic and acidic residues; the sequence is KRADLVEKVRREAEQRAREEKEREREREREKEREREKERELERSV. The required for interaction with FAT1 stretch occupies residues 872 to 887; the sequence is DTPALRTLSEYARPHV. Serine 889 carries the phosphoserine modification. Positions 921–940 are disordered; it reads PAAREREREARERDLRDRLK. Positions 922-940 are enriched in basic and acidic residues; sequence AAREREREARERDLRDRLK. The short motif at 1026–1034 is the Nuclear export signal element; sequence ALGNDPLAR. Arginine 1108 is modified (asymmetric dimethylarginine). A Glycyl lysine isopeptide (Lys-Gly) (interchain with G-Cter in SUMO2) cross-link involves residue lysine 1176.

In terms of assembly, interacts with NR2E1; the interaction represses the transcriptional activity of NR2E1. Interact (via its N-terminus) with FAT1 (via a C-terminal domain). Interacts with BAIAP2, WWP1, WWP2, WWP3 and RERE. Interacts (via its N-terminus) with MTG8; the interaction enhances transcriptional repression of MTG8. Interacts with PQBP1. In terms of processing, phosphorylated in vitro by MAPK8/JNK1 on Ser-732. Predominant neuronal expression, Expressed in most brain regions including striatum, hippocampus, cerebral cortex, diencephalon, brain stem and cerebellum. Highest levels in cerebellum. Also highly expressed in kidney and testis, low expression in skeletal muscle and heart.

It is found in the nucleus. The protein resides in the cytoplasm. The protein localises to the perinuclear region. Its subcellular location is the cell junction. In terms of biological role, transcriptional corepressor. Recruits NR2E1 to repress transcription. Promotes vascular smooth cell (VSMC) migration and orientation. Corepressor of MTG8 transcriptional repression. Has some intrinsic repression activity. This is Atrophin-1 (Atn1) from Rattus norvegicus (Rat).